Reading from the N-terminus, the 854-residue chain is DNA mismatch repair protein MutS (854 aa).

614–621 (GPNMGGKS) is a binding site for ATP.

Belongs to the DNA mismatch repair MutS family.

In terms of biological role, this protein is involved in the repair of mismatches in DNA. It is possible that it carries out the mismatch recognition step. This protein has a weak ATPase activity. This Yersinia pestis bv. Antiqua (strain Antiqua) protein is DNA mismatch repair protein MutS.